The following is a 100-amino-acid chain: Small ribosomal subunit protein uS14c (100 aa).

This sequence belongs to the universal ribosomal protein uS14 family. As to quaternary structure, part of the 30S ribosomal subunit.

Its subcellular location is the plastid. It localises to the chloroplast. In terms of biological role, binds 16S rRNA, required for the assembly of 30S particles. The sequence is that of Small ribosomal subunit protein uS14c from Phaeodactylum tricornutum (strain CCAP 1055/1).